We begin with the raw amino-acid sequence, 626 residues long: Chaperone protein HtpG (626 aa).

The tract at residues 1–341 is a; substrate-binding; that stretch reads METKQFKAES…SEDLSLNISR (341 aa). The segment at 342 to 552 is b; it reads EILQHDRQLK…EGELSIEMEK (211 aa). Positions 490 to 509 are disordered; sequence DLGIEGEEKENTSSSDDKEN. Over residues 498-509 the composition is skewed to basic and acidic residues; that stretch reads KENTSSSDDKEN. A c region spans residues 553–626; it reads VLNAMPNNQN…FTNNICKIMK (74 aa).

The protein belongs to the heat shock protein 90 family. As to quaternary structure, homodimer.

It localises to the cytoplasm. Functionally, molecular chaperone. Has ATPase activity. This Clostridium botulinum (strain Okra / Type B1) protein is Chaperone protein HtpG.